We begin with the raw amino-acid sequence, 324 residues long: MPLKAELHCHIEGAAAPELVIRQAQKYGKDTAPYIQNGSFVWHDFTSFLAAYDFSAELFRTEEDYARLADHYLTSLARDGAIYSEVFTSPDHATKAGLSPKAYTDALGEGMLRAKAKTGIEGRMIVTGVRHVGVESIERAARFAARCGNPLVTGFGVAGDERVGEMEDYVRAFEIAREAGLGITIHAGELTGWETVQAALDHIRPSRIGHGVRAIENPDLVRRIADEGIVLECCPGSNIALKVFDSFADHPLPALQAAGCKVTLNSDDPPYFWTSLKREYDIAAEHFAMNEKALAAVTRTAIEAAFVDRKTKAALLARLNGAAR.

Zn(2+) contacts are provided by histidine 8, histidine 10, and histidine 186. The Proton donor role is filled by glutamate 189. Residue aspartate 267 participates in Zn(2+) binding. Aspartate 268 contacts substrate.

The protein belongs to the metallo-dependent hydrolases superfamily. Adenosine and AMP deaminases family. Adenine deaminase type 2 subfamily. It depends on Zn(2+) as a cofactor.

It catalyses the reaction adenine + H2O + H(+) = hypoxanthine + NH4(+). Catalyzes the hydrolytic deamination of adenine to hypoxanthine. Plays an important role in the purine salvage pathway and in nitrogen catabolism. In Mesorhizobium japonicum (strain LMG 29417 / CECT 9101 / MAFF 303099) (Mesorhizobium loti (strain MAFF 303099)), this protein is Adenine deaminase.